The sequence spans 488 residues: Palmitoleoyl-protein carboxylesterase notum1 (488 aa).

An N-terminal signal peptide occupies residues 1-20 (MAGALCVTLLLLLSTNTVSG). Asn90 carries an N-linked (GlcNAc...) asparagine glycan. Residues Ser226, Asp334, and His383 each act as charge relay system in the active site.

It belongs to the pectinacetylesterase family. Notum subfamily. As to expression, expressed in the egg and through cleavage to gastrulation stages. Enriched in the animal (prospective ectoderm) and dorsal regions in early gastrula. Shows a dynamic expression during embryogenesis, in particular during neural induction and antero-posterior (AP) patterning.

The protein localises to the secreted. The catalysed reaction is [Wnt protein]-O-(9Z)-hexadecenoyl-L-serine + H2O = [Wnt protein]-L-serine + (9Z)-hexadecenoate + H(+). Its function is as follows. Carboxylesterase that acts as a key negative regulator of the Wnt signaling pathway by specifically mediating depalmitoleoylation of WNT proteins. Serine palmitoleoylation of WNT proteins is required for efficient binding to frizzled receptors. Functions in the prospective ectoderm and is required for neural induction. The protein is Palmitoleoyl-protein carboxylesterase notum1 of Xenopus laevis (African clawed frog).